The chain runs to 395 residues: S-adenosylmethionine synthase 2 (395 aa).

A Mg(2+)-binding site is contributed by Glu9. Residue His15 participates in ATP binding. Glu43 is a binding site for K(+). L-methionine contacts are provided by Glu56 and Gln99. Residues 167–169, 235–238, Asp246, 252–253, Ala269, Lys273, and Lys277 contribute to the ATP site; these read DGK, SGRF, and RK. Asp246 contacts L-methionine. Lys277 contacts L-methionine.

It belongs to the AdoMet synthase family. Homotetramer. The cofactor is Mn(2+). Requires Mg(2+) as cofactor. It depends on Co(2+) as a cofactor. K(+) serves as cofactor.

The protein localises to the cytoplasm. It carries out the reaction L-methionine + ATP + H2O = S-adenosyl-L-methionine + phosphate + diphosphate. It functions in the pathway amino-acid biosynthesis; S-adenosyl-L-methionine biosynthesis; S-adenosyl-L-methionine from L-methionine: step 1/1. Catalyzes the formation of S-adenosylmethionine from methionine and ATP. The reaction comprises two steps that are both catalyzed by the same enzyme: formation of S-adenosylmethionine (AdoMet) and triphosphate, and subsequent hydrolysis of the triphosphate. The polypeptide is S-adenosylmethionine synthase 2 (METK2) (Suaeda salsa (Seepweed)).